The following is a 140-amino-acid chain: Peptide methionine sulfoxide reductase MsrB (140 aa).

The MsrB domain occupies 10-132; the sequence is EEDWKSVLTP…NSVSLGFTKE (123 aa). Residues Cys-49, Cys-52, Cys-98, and Cys-101 each contribute to the Zn(2+) site. Catalysis depends on Cys-121, which acts as the Nucleophile.

This sequence belongs to the MsrB Met sulfoxide reductase family. Zn(2+) is required as a cofactor.

It carries out the reaction L-methionyl-[protein] + [thioredoxin]-disulfide + H2O = L-methionyl-(R)-S-oxide-[protein] + [thioredoxin]-dithiol. The polypeptide is Peptide methionine sulfoxide reductase MsrB (Methanosarcina mazei (strain ATCC BAA-159 / DSM 3647 / Goe1 / Go1 / JCM 11833 / OCM 88) (Methanosarcina frisia)).